Reading from the N-terminus, the 553-residue chain is Methionine--tRNA ligase (553 aa).

The short motif at 12 to 22 is the 'HIGH' region element; it reads PYANSQLHLGH. Zn(2+) contacts are provided by cysteine 144, cysteine 147, cysteine 157, and cysteine 160. Residues 332 to 336 carry the 'KMSKS' region motif; it reads KFSKS. Residue lysine 335 coordinates ATP.

It belongs to the class-I aminoacyl-tRNA synthetase family. MetG type 1 subfamily. In terms of assembly, monomer. Requires Zn(2+) as cofactor.

It localises to the cytoplasm. It catalyses the reaction tRNA(Met) + L-methionine + ATP = L-methionyl-tRNA(Met) + AMP + diphosphate. In terms of biological role, is required not only for elongation of protein synthesis but also for the initiation of all mRNA translation through initiator tRNA(fMet) aminoacylation. The polypeptide is Methionine--tRNA ligase (Dehalococcoides mccartyi (strain CBDB1)).